A 162-amino-acid chain; its full sequence is Glycogen accumulation regulator GarA (162 aa).

Thr21 bears the Phosphothreonine; by PknG mark. Phosphothreonine; by PknB is present on Thr22. The 50-residue stretch at 77 to 126 (TSAGRHPDSDIFLDDVTVSRRHAEFRLENNEFNVVDVGSLNGTYVNREPV) folds into the FHA domain.

In terms of assembly, monomer. Post-translationally, phosphorylated on Thr-22 by PknB. Phosphorylated on Thr-21 by PknG. Phosphorylation at either Thr-21 or Thr-22 prevents binding to target enzymes.

Functionally, involved in regulation of glutamate metabolism. This Mycobacterium tuberculosis (strain CDC 1551 / Oshkosh) protein is Glycogen accumulation regulator GarA (garA).